Reading from the N-terminus, the 190-residue chain is Imidazoleglycerol-phosphate dehydratase (190 aa).

The protein belongs to the imidazoleglycerol-phosphate dehydratase family.

It localises to the cytoplasm. It carries out the reaction D-erythro-1-(imidazol-4-yl)glycerol 3-phosphate = 3-(imidazol-4-yl)-2-oxopropyl phosphate + H2O. It participates in amino-acid biosynthesis; L-histidine biosynthesis; L-histidine from 5-phospho-alpha-D-ribose 1-diphosphate: step 6/9. The polypeptide is Imidazoleglycerol-phosphate dehydratase (Methanococcus vannielii (strain ATCC 35089 / DSM 1224 / JCM 13029 / OCM 148 / SB)).